We begin with the raw amino-acid sequence, 587 residues long: Probable phosphoribomutase (587 aa).

Residues T49, R53, and 149-150 (SH) each bind substrate. S149 (phosphoserine intermediate) is an active-site residue. The Mg(2+) site is built by S149, D306, D308, and D310. S149 is modified (phosphoserine). Substrate-binding positions include 310–311 (DR), T380, 404–406 (EEA), and K418.

This sequence belongs to the phosphohexose mutase family. Mg(2+) is required as a cofactor.

The protein localises to the cytoplasm. It localises to the nucleus. The catalysed reaction is alpha-D-ribose 1-phosphate = D-ribose 5-phosphate. In terms of biological role, converts ribose 1-phosphate to ribose 5-phosphate. Involved in ribose salvage via the pentose phosphate pathway. The sequence is that of Probable phosphoribomutase from Schizosaccharomyces pombe (strain 972 / ATCC 24843) (Fission yeast).